Consider the following 835-residue polypeptide: Protein translocase subunit SecA 1 (835 aa).

Residues glutamine 85, glycine 103 to threonine 107, and aspartate 492 contribute to the ATP site. The interval valine 788–valine 807 is disordered. Zn(2+) contacts are provided by cysteine 819, cysteine 821, cysteine 830, and cysteine 831.

It belongs to the SecA family. As to quaternary structure, monomer and homodimer. Part of the essential Sec protein translocation apparatus which comprises SecA, SecYEG and auxiliary proteins SecDF. Other proteins may also be involved. The cofactor is Zn(2+).

The protein resides in the cell membrane. It localises to the cytoplasm. The catalysed reaction is ATP + H2O + cellular proteinSide 1 = ADP + phosphate + cellular proteinSide 2.. Part of the Sec protein translocase complex. Interacts with the SecYEG preprotein conducting channel. Has a central role in coupling the hydrolysis of ATP to the transfer of proteins into and across the cell membrane, serving as an ATP-driven molecular motor driving the stepwise translocation of polypeptide chains across the membrane. The polypeptide is Protein translocase subunit SecA 1 (Bacillus anthracis).